Reading from the N-terminus, the 443-residue chain is Probable glutamate dehydrogenase (443 aa).

The active site involves lysine 86.

This sequence belongs to the Glu/Leu/Phe/Val dehydrogenases family.

It carries out the reaction L-glutamate + NAD(+) + H2O = 2-oxoglutarate + NH4(+) + NADH + H(+). The enzyme catalyses L-glutamate + NADP(+) + H2O = 2-oxoglutarate + NH4(+) + NADPH + H(+). This Sinorhizobium fredii (strain NBRC 101917 / NGR234) protein is Probable glutamate dehydrogenase.